A 484-amino-acid polypeptide reads, in one-letter code: MKHSGGNQACYVLGQKTPSIRDLYSLGHKLGQGQFGTTYMCKEISTGREYACKSITKRKLISKEDVEDVRREIQIMHHLAGYKNIVTIKGAYEDPLYVHIVMELCSGGELFDRIIQRGHYSERKAAELIKIIVGVVEACHSLGVMHRDLKPENFLLVNKDDDFSLKAIDFGLSVFFKPGQIFEDVVGSPYYVAPEVLLKHYGPEADVWTAGVILYILVSGVPPFWAETQQGIFDAVLKGHIDFDSDPWPLISDSAKNLIRGMLCSRPSERLTAHQVLRHPWICENGVAPDRALDPAVLSRLKQFSAMNKLKQMALRVIAESLSEEEIAGLKEMFKAMDTDNSGAITFDELKAGLRRYGSTLKDTEIRDLMEAADIDKSGTIDYGEFIAATIHLNKLEREEHLLSAFRYFDKDGSGYITIDELQHACAEQGMSDVFLEDVIKEVDQDNDGRIDYGEFVAMMQKGIVGRTMRKSINMSIRNNAVSQ.

The Protein kinase domain maps to 24-282; the sequence is YSLGHKLGQG…AHQVLRHPWI (259 aa). ATP is bound by residues 30–38 and lysine 53; that span reads LGQGQFGTT. Aspartate 148 functions as the Proton acceptor in the catalytic mechanism. Serine 188 carries the phosphoserine modification. Residues 288–318 are autoinhibitory domain; sequence APDRALDPAVLSRLKQFSAMNKLKQMALRVI. EF-hand domains lie at 325–360, 361–396, 397–432, and 436–466; these read EEIA…YGST, LKDT…LNKL, EREE…QGMS, and LEDV…GIVG. The Ca(2+) site is built by aspartate 338, aspartate 340, serine 342, glutamate 349, aspartate 374, aspartate 376, serine 378, threonine 380, glutamate 385, aspartate 410, aspartate 412, serine 414, tyrosine 416, glutamate 421, aspartate 444, aspartate 446, aspartate 448, arginine 450, and glutamate 455.

Belongs to the protein kinase superfamily. Ser/Thr protein kinase family. CDPK subfamily.

The enzyme catalyses L-seryl-[protein] + ATP = O-phospho-L-seryl-[protein] + ADP + H(+). It catalyses the reaction L-threonyl-[protein] + ATP = O-phospho-L-threonyl-[protein] + ADP + H(+). With respect to regulation, activated by calcium. Autophosphorylation may play an important role in the regulation of the kinase activity. In terms of biological role, may play a role in signal transduction pathways that involve calcium as a second messenger. The polypeptide is Calcium-dependent protein kinase 26 (CPK26) (Arabidopsis thaliana (Mouse-ear cress)).